A 421-amino-acid polypeptide reads, in one-letter code: Type II methyltransferase M.TaqI (421 aa).

Low complexity predominate over residues methionine 1 to leucine 18. Residues methionine 1–arginine 20 are disordered. Residues threonine 23, glutamate 45–cysteine 48, glutamate 71, aspartate 89, and proline 107 contribute to the S-adenosyl-L-methionine site.

It belongs to the N(4)/N(6)-methyltransferase family.

It carries out the reaction a 2'-deoxyadenosine in DNA + S-adenosyl-L-methionine = an N(6)-methyl-2'-deoxyadenosine in DNA + S-adenosyl-L-homocysteine + H(+). Functionally, a gamma subtype methylase that recognizes the double-stranded sequence 5'-TCGA-3', methylates A-4 on both strands and protects the DNA from cleavage by the TaqI endonuclease. This Thermus aquaticus protein is Type II methyltransferase M.TaqI (taqIM).